Here is a 307-residue protein sequence, read N- to C-terminus: Phosphoribosylaminoimidazole-succinocarboxamide synthase (307 aa).

It belongs to the SAICAR synthetase family.

It carries out the reaction 5-amino-1-(5-phospho-D-ribosyl)imidazole-4-carboxylate + L-aspartate + ATP = (2S)-2-[5-amino-1-(5-phospho-beta-D-ribosyl)imidazole-4-carboxamido]succinate + ADP + phosphate + 2 H(+). Its pathway is purine metabolism; IMP biosynthesis via de novo pathway; 5-amino-1-(5-phospho-D-ribosyl)imidazole-4-carboxamide from 5-amino-1-(5-phospho-D-ribosyl)imidazole-4-carboxylate: step 1/2. This is Phosphoribosylaminoimidazole-succinocarboxamide synthase from Thermobifida fusca (strain YX).